A 503-amino-acid polypeptide reads, in one-letter code: Alpha-1,3/1,6-mannosyltransferase ALG2 (503 aa).

A run of 2 helical transmembrane segments spans residues 64–84 (VYGD…FATI) and 112–132 (TCIP…CHFP). Asn170, Asn303, Asn371, and Asn400 each carry an N-linked (GlcNAc...) asparagine glycan. The helical transmembrane segment at 443–463 (WEIFGISFSNFILHMAFIKIL) threads the bilayer.

The protein belongs to the glycosyltransferase group 1 family. Glycosyltransferase 4 subfamily. As to quaternary structure, interacts with ALG1.

The protein resides in the endoplasmic reticulum membrane. The enzyme catalyses a beta-D-Man-(1-&gt;4)-beta-D-GlcNAc-(1-&gt;4)-alpha-D-GlcNAc-diphospho-di-trans,poly-cis-dolichol + GDP-alpha-D-mannose = an alpha-D-Man-(1-&gt;3)-beta-D-Man-(1-&gt;4)-beta-D-GlcNAc-(1-&gt;4)-alpha-D-GlcNAc-diphospho-di-trans,poly-cis-dolichol + GDP + H(+). The catalysed reaction is an alpha-D-Man-(1-&gt;3)-beta-D-Man-(1-&gt;4)-beta-D-GlcNAc-(1-&gt;4)-alpha-D-GlcNAc-diphospho-di-trans,poly-cis-dolichol + GDP-alpha-D-mannose = an alpha-D-Man-(1-&gt;3)-[alpha-D-Man-(1-&gt;6)]-beta-D-Man-(1-&gt;4)-beta-D-GlcNAc-(1-&gt;4)-alpha-D-GlcNAc-diphospho-di-trans,poly-cis-dolichol + GDP + H(+). The protein operates within protein modification; protein glycosylation. Mannosylates Man(2)GlcNAc(2)-dolichol diphosphate and Man(1)GlcNAc(2)-dolichol diphosphate to form Man(3)GlcNAc(2)-dolichol diphosphate. The protein is Alpha-1,3/1,6-mannosyltransferase ALG2 (ALG2) of Saccharomyces cerevisiae (strain ATCC 204508 / S288c) (Baker's yeast).